Here is a 162-residue protein sequence, read N- to C-terminus: NADH-quinone oxidoreductase subunit I (162 aa).

4Fe-4S ferredoxin-type domains lie at 54–83 (RRYE…IESE) and 93–122 (TRYD…ETQI). [4Fe-4S] cluster is bound by residues cysteine 63, cysteine 66, cysteine 69, cysteine 73, cysteine 102, cysteine 105, cysteine 108, and cysteine 112.

This sequence belongs to the complex I 23 kDa subunit family. NDH-1 is composed of 14 different subunits. Subunits NuoA, H, J, K, L, M, N constitute the membrane sector of the complex. The cofactor is [4Fe-4S] cluster.

It is found in the cell inner membrane. The catalysed reaction is a quinone + NADH + 5 H(+)(in) = a quinol + NAD(+) + 4 H(+)(out). In terms of biological role, NDH-1 shuttles electrons from NADH, via FMN and iron-sulfur (Fe-S) centers, to quinones in the respiratory chain. The immediate electron acceptor for the enzyme in this species is believed to be ubiquinone. Couples the redox reaction to proton translocation (for every two electrons transferred, four hydrogen ions are translocated across the cytoplasmic membrane), and thus conserves the redox energy in a proton gradient. The protein is NADH-quinone oxidoreductase subunit I of Burkholderia cenocepacia (strain ATCC BAA-245 / DSM 16553 / LMG 16656 / NCTC 13227 / J2315 / CF5610) (Burkholderia cepacia (strain J2315)).